A 160-amino-acid chain; its full sequence is Glutathione peroxidase homolog BsaA (160 aa).

Residue Cys-35 is part of the active site.

Belongs to the glutathione peroxidase family.

In Bacillus subtilis (strain 168), this protein is Glutathione peroxidase homolog BsaA (bsaA).